The chain runs to 256 residues: NH(3)-dependent NAD(+) synthetase (256 aa).

29 to 36 (GISGGIDS) contributes to the ATP binding site. Position 35 (Asp35) interacts with Mg(2+). Arg115 is a deamido-NAD(+) binding site. Thr135 is an ATP binding site. Glu140 serves as a coordination point for Mg(2+). Lys148 and Asp155 together coordinate deamido-NAD(+). ATP contacts are provided by Lys164 and Ser186. Residue 245 to 246 (HK) participates in deamido-NAD(+) binding.

This sequence belongs to the NAD synthetase family. In terms of assembly, homodimer.

The catalysed reaction is deamido-NAD(+) + NH4(+) + ATP = AMP + diphosphate + NAD(+) + H(+). The protein operates within cofactor biosynthesis; NAD(+) biosynthesis; NAD(+) from deamido-NAD(+) (ammonia route): step 1/1. Functionally, catalyzes the ATP-dependent amidation of deamido-NAD to form NAD. Uses ammonia as a nitrogen source. The protein is NH(3)-dependent NAD(+) synthetase of Methanosarcina acetivorans (strain ATCC 35395 / DSM 2834 / JCM 12185 / C2A).